The primary structure comprises 631 residues: Phosphomethylpyrimidine synthase (631 aa).

Residues asparagine 239, methionine 268, tyrosine 297, histidine 333, 353–355 (SRG), 394–397 (DGLR), and glutamate 433 contribute to the substrate site. Histidine 437 contacts Zn(2+). Residue tyrosine 460 coordinates substrate. Residue histidine 501 participates in Zn(2+) binding. [4Fe-4S] cluster-binding residues include cysteine 581, cysteine 584, and cysteine 589.

It belongs to the ThiC family. In terms of assembly, homodimer. It depends on [4Fe-4S] cluster as a cofactor.

The catalysed reaction is 5-amino-1-(5-phospho-beta-D-ribosyl)imidazole + S-adenosyl-L-methionine = 4-amino-2-methyl-5-(phosphooxymethyl)pyrimidine + CO + 5'-deoxyadenosine + formate + L-methionine + 3 H(+). Its pathway is cofactor biosynthesis; thiamine diphosphate biosynthesis. Catalyzes the synthesis of the hydroxymethylpyrimidine phosphate (HMP-P) moiety of thiamine from aminoimidazole ribotide (AIR) in a radical S-adenosyl-L-methionine (SAM)-dependent reaction. This Salmonella heidelberg (strain SL476) protein is Phosphomethylpyrimidine synthase.